A 427-amino-acid chain; its full sequence is Serine--tRNA ligase (427 aa).

Position 235-237 (235-237 (TAE)) interacts with L-serine. ATP is bound by residues 266-268 (RRE) and Val-282. L-serine is bound at residue Glu-289. Position 353 to 356 (353 to 356 (EASS)) interacts with ATP. L-serine is bound at residue Ser-389.

This sequence belongs to the class-II aminoacyl-tRNA synthetase family. Type-1 seryl-tRNA synthetase subfamily. Homodimer. The tRNA molecule binds across the dimer.

The protein resides in the cytoplasm. It carries out the reaction tRNA(Ser) + L-serine + ATP = L-seryl-tRNA(Ser) + AMP + diphosphate + H(+). It catalyses the reaction tRNA(Sec) + L-serine + ATP = L-seryl-tRNA(Sec) + AMP + diphosphate + H(+). Its pathway is aminoacyl-tRNA biosynthesis; selenocysteinyl-tRNA(Sec) biosynthesis; L-seryl-tRNA(Sec) from L-serine and tRNA(Sec): step 1/1. In terms of biological role, catalyzes the attachment of serine to tRNA(Ser). Is also able to aminoacylate tRNA(Sec) with serine, to form the misacylated tRNA L-seryl-tRNA(Sec), which will be further converted into selenocysteinyl-tRNA(Sec). This Chlorobaculum parvum (strain DSM 263 / NCIMB 8327) (Chlorobium vibrioforme subsp. thiosulfatophilum) protein is Serine--tRNA ligase.